The following is a 272-amino-acid chain: 2-succinyl-6-hydroxy-2,4-cyclohexadiene-1-carboxylate synthase (272 aa).

This sequence belongs to the AB hydrolase superfamily. MenH family. Monomer.

It carries out the reaction 5-enolpyruvoyl-6-hydroxy-2-succinyl-cyclohex-3-ene-1-carboxylate = (1R,6R)-6-hydroxy-2-succinyl-cyclohexa-2,4-diene-1-carboxylate + pyruvate. It participates in quinol/quinone metabolism; 1,4-dihydroxy-2-naphthoate biosynthesis; 1,4-dihydroxy-2-naphthoate from chorismate: step 3/7. The protein operates within quinol/quinone metabolism; menaquinone biosynthesis. Catalyzes a proton abstraction reaction that results in 2,5-elimination of pyruvate from 2-succinyl-5-enolpyruvyl-6-hydroxy-3-cyclohexene-1-carboxylate (SEPHCHC) and the formation of 2-succinyl-6-hydroxy-2,4-cyclohexadiene-1-carboxylate (SHCHC). The sequence is that of 2-succinyl-6-hydroxy-2,4-cyclohexadiene-1-carboxylate synthase from Yersinia pseudotuberculosis serotype I (strain IP32953).